The chain runs to 272 residues: Hydroxyethylthiazole kinase (272 aa).

Residue M62 participates in substrate binding. Positions 138 and 183 each coordinate ATP. Residue G210 participates in substrate binding.

The protein belongs to the Thz kinase family. The cofactor is Mg(2+).

The catalysed reaction is 5-(2-hydroxyethyl)-4-methylthiazole + ATP = 4-methyl-5-(2-phosphooxyethyl)-thiazole + ADP + H(+). It functions in the pathway cofactor biosynthesis; thiamine diphosphate biosynthesis; 4-methyl-5-(2-phosphoethyl)-thiazole from 5-(2-hydroxyethyl)-4-methylthiazole: step 1/1. Its function is as follows. Catalyzes the phosphorylation of the hydroxyl group of 4-methyl-5-beta-hydroxyethylthiazole (THZ). This chain is Hydroxyethylthiazole kinase, found in Dichelobacter nodosus (strain VCS1703A).